Here is a 430-residue protein sequence, read N- to C-terminus: Gamma-glutamyl phosphate reductase (430 aa).

This sequence belongs to the gamma-glutamyl phosphate reductase family.

The protein resides in the cytoplasm. The catalysed reaction is L-glutamate 5-semialdehyde + phosphate + NADP(+) = L-glutamyl 5-phosphate + NADPH + H(+). The protein operates within amino-acid biosynthesis; L-proline biosynthesis; L-glutamate 5-semialdehyde from L-glutamate: step 2/2. Functionally, catalyzes the NADPH-dependent reduction of L-glutamate 5-phosphate into L-glutamate 5-semialdehyde and phosphate. The product spontaneously undergoes cyclization to form 1-pyrroline-5-carboxylate. In Rhodopseudomonas palustris (strain BisB5), this protein is Gamma-glutamyl phosphate reductase.